A 407-amino-acid chain; its full sequence is Imidazolonepropionase (407 aa).

Positions 68 and 70 each coordinate Fe(3+). Residues His68 and His70 each contribute to the Zn(2+) site. Positions 77, 140, and 173 each coordinate 4-imidazolone-5-propanoate. Tyr140 is a binding site for N-formimidoyl-L-glutamate. A Fe(3+)-binding site is contributed by His238. His238 lines the Zn(2+) pocket. Gln241 lines the 4-imidazolone-5-propanoate pocket. Asp313 contacts Fe(3+). Asp313 is a binding site for Zn(2+). N-formimidoyl-L-glutamate is bound by residues Asn315 and Gly317. A 4-imidazolone-5-propanoate-binding site is contributed by Thr318.

Belongs to the metallo-dependent hydrolases superfamily. HutI family. It depends on Zn(2+) as a cofactor. The cofactor is Fe(3+).

The protein localises to the cytoplasm. The enzyme catalyses 4-imidazolone-5-propanoate + H2O = N-formimidoyl-L-glutamate. It functions in the pathway amino-acid degradation; L-histidine degradation into L-glutamate; N-formimidoyl-L-glutamate from L-histidine: step 3/3. In terms of biological role, catalyzes the hydrolytic cleavage of the carbon-nitrogen bond in imidazolone-5-propanoate to yield N-formimidoyl-L-glutamate. It is the third step in the universal histidine degradation pathway. This Burkholderia pseudomallei (strain 668) protein is Imidazolonepropionase.